The primary structure comprises 436 residues: Trigger factor (436 aa).

A PPIase FKBP-type domain is found at 163 to 248; the sequence is GDRVTLDFAG…VKEVAEGVLP (86 aa).

This sequence belongs to the FKBP-type PPIase family. Tig subfamily.

It is found in the cytoplasm. It carries out the reaction [protein]-peptidylproline (omega=180) = [protein]-peptidylproline (omega=0). In terms of biological role, involved in protein export. Acts as a chaperone by maintaining the newly synthesized protein in an open conformation. Functions as a peptidyl-prolyl cis-trans isomerase. This Bordetella petrii (strain ATCC BAA-461 / DSM 12804 / CCUG 43448) protein is Trigger factor.